A 175-amino-acid polypeptide reads, in one-letter code: ATP synthase subunit b (175 aa).

Residues 20-40 (LIFWTAVTFVIVLLILKQLAW) form a helical membrane-spanning segment.

The protein belongs to the ATPase B chain family. F-type ATPases have 2 components, F(1) - the catalytic core - and F(0) - the membrane proton channel. F(1) has five subunits: alpha(3), beta(3), gamma(1), delta(1), epsilon(1). F(0) has four main subunits: a(1), b(2) and c(10-14). The alpha and beta chains form an alternating ring which encloses part of the gamma chain. F(1) is attached to F(0) by a central stalk formed by the gamma and epsilon chains, while a peripheral stalk is formed by the delta and b chains.

Its subcellular location is the cell inner membrane. Its function is as follows. F(1)F(0) ATP synthase produces ATP from ADP in the presence of a proton or sodium gradient. F-type ATPases consist of two structural domains, F(1) containing the extramembraneous catalytic core and F(0) containing the membrane proton channel, linked together by a central stalk and a peripheral stalk. During catalysis, ATP synthesis in the catalytic domain of F(1) is coupled via a rotary mechanism of the central stalk subunits to proton translocation. In terms of biological role, component of the F(0) channel, it forms part of the peripheral stalk, linking F(1) to F(0). In Chlorobium limicola (strain DSM 245 / NBRC 103803 / 6330), this protein is ATP synthase subunit b.